The primary structure comprises 132 residues: Interleukin-4 (132 aa).

A signal peptide spans 1–24 (MGLTSQLIPTLVCLLALTSTFVHG). Asn28, Asn45, Asn62, Asn83, Asn95, and Asn101 each carry an N-linked (GlcNAc...) asparagine glycan. 2 disulfide bridges follow: Cys48–Cys84 and Cys70–Cys104.

It belongs to the IL-4/IL-13 family.

Its subcellular location is the secreted. Participates in at least several B-cell activation processes as well as of other cell types. It is a costimulator of DNA-synthesis. It induces the expression of class II MHC molecules on resting B-cells. It enhances both secretion and cell surface expression of IgE and IgG1. It also regulates the expression of the low affinity Fc receptor for IgE (CD23) on both lymphocytes and monocytes. Positively regulates IL31RA expression in macrophages. Stimulates autophagy in dendritic cells by interfering with mTORC1 signaling and through the induction of RUFY4. The protein is Interleukin-4 (IL4) of Canis lupus familiaris (Dog).